Reading from the N-terminus, the 149-residue chain is Cell division protein SepF (149 aa).

The disordered stretch occupies residues 12 to 57 (SNEEDDYYEEDGYEQSQQQEQQTTQQTSSQPRFVRQTTQSQTPAGL). Residues 13–24 (NEEDDYYEEDGY) are compositionally biased toward acidic residues. A compositionally biased stretch (low complexity) spans 25–41 (EQSQQQEQQTTQQTSSQ). The segment covering 46–57 (RQTTQSQTPAGL) has biased composition (polar residues).

Belongs to the SepF family. Homodimer. Interacts with FtsZ.

It localises to the cytoplasm. Cell division protein that is part of the divisome complex and is recruited early to the Z-ring. Probably stimulates Z-ring formation, perhaps through the cross-linking of FtsZ protofilaments. Its function overlaps with FtsA. The sequence is that of Cell division protein SepF from Leuconostoc mesenteroides subsp. mesenteroides (strain ATCC 8293 / DSM 20343 / BCRC 11652 / CCM 1803 / JCM 6124 / NCDO 523 / NBRC 100496 / NCIMB 8023 / NCTC 12954 / NRRL B-1118 / 37Y).